We begin with the raw amino-acid sequence, 245 residues long: MPRYKLTIEYDGAPFCGWQLQPTLPSVQGALEAAALATCGEAVRVHGAGRTDAGVHALGQVAHVDIPKPFRADKLRDALNAHVRPHPIAVLSAELVADDFEARFSAIRRHYRYRIVNRRSNLALELGKVWRVPKPLDTDAMHRAAQVLIGKHDFTTFRDTECQAASPAKTLDVLDVVRNGDAVDIITNARSYLHSQVRSMVGSLVWVGEGRWTADDLAAALAARRRSACGPVAPPDGLYLVQVDY.

The active-site Nucleophile is D52. A substrate-binding site is contributed by Y111.

Belongs to the tRNA pseudouridine synthase TruA family. In terms of assembly, homodimer.

It carries out the reaction uridine(38/39/40) in tRNA = pseudouridine(38/39/40) in tRNA. In terms of biological role, formation of pseudouridine at positions 38, 39 and 40 in the anticodon stem and loop of transfer RNAs. This chain is tRNA pseudouridine synthase A, found in Rhodopseudomonas palustris (strain HaA2).